Consider the following 212-residue polypeptide: MNSKFIVIEGLEGAGKTTARDTVVAVLRAQGINDIVFTREPGGTPLAEKLRDLIKQGIDGEVLTDKAEVLMLYAARVQLVENVIKPALARGSWVVGDRHDLSSQAYQGGGRGIDSQLMASLRDTVLGEFRPDLTLYLDLPPAVGLARARARGELDRIEQESLAFFERTRARYLELAASDASIKTIDASQPIEQVSASISQALAQWLTNQEPV.

An ATP-binding site is contributed by 10-17 (GLEGAGKT).

It belongs to the thymidylate kinase family.

The catalysed reaction is dTMP + ATP = dTDP + ADP. Its function is as follows. Phosphorylation of dTMP to form dTDP in both de novo and salvage pathways of dTTP synthesis. This Yersinia pseudotuberculosis serotype O:3 (strain YPIII) protein is Thymidylate kinase.